We begin with the raw amino-acid sequence, 164 residues long: Photosystem II extrinsic protein V (164 aa).

The N-terminal stretch at 1–27 is a signal peptide; sequence MIPNRKIQLSLFAVIIVFETLLNQVYA. Cysteine 64, cysteine 67, histidine 68, and methionine 131 together coordinate heme c.

The protein belongs to the cytochrome c family. PsbV subfamily. As to quaternary structure, PSII is composed of 1 copy each of membrane proteins PsbA, PsbB, PsbC, PsbD, PsbE, PsbF, PsbH, PsbI, PsbJ, PsbK, PsbL, PsbM, PsbT, PsbY, PsbZ, Psb30/Ycf12, at least 3 peripheral proteins of the oxygen-evolving complex and a large number of cofactors. It forms dimeric complexes. The extrinsic subunits in red algae are PsbO (OEC33), PsbQ', cytochrome c-550 and PsbU. Requires heme c as cofactor.

The protein resides in the plastid. It is found in the chloroplast thylakoid membrane. In terms of biological role, one of the extrinsic, lumenal subunits of photosystem II (PSII). PSII is a light-driven water plastoquinone oxidoreductase, using light energy to abstract electrons from H(2)O, generating a proton gradient subsequently used for ATP formation. The extrinsic proteins stabilize the structure of photosystem II oxygen-evolving complex (OEC), the ion environment of oxygen evolution and protect the OEC against heat-induced inactivation. In Gracilaria tenuistipitata var. liui (Red alga), this protein is Photosystem II extrinsic protein V.